A 613-amino-acid polypeptide reads, in one-letter code: Cysteine--tRNA ligase (613 aa).

Positions 1–130 (MSAGAGTPRR…TRGGVARSGN (130 aa)) are disordered. 6 tandem repeats follow at residues 36–49 (PTRGDKKRARRPGV), 50–63 (PTRGDKKRAPRLGV), 64–77 (PARGDKKRARRPGV), 78–91 (PAREDKKRAPRPGV), 92–105 (PTRGDKKRAPRLGV), and 106–119 (PARGDKKRARRPGV). Positions 36 to 119 (PTRGDKKRAR…DKKRARRPGV (84 aa)) are 6 X 14 AA tandem repeats of P-[TA]-R-G-D-K-K-R-A-[RP]-R-[PL]-G-V. The interval 148 to 613 (VTIRLYDTSA…QGPRWSLGSR (466 aa)) is cysteinyl-tRNA synthetase. Position 176 (C176) interacts with Zn(2+). The short motif at 178–188 (ATVQAAPHIGH) is the 'HIGH' region element. Zn(2+) is bound by residues C355, H380, and E384. Residues 411-415 (KMSKS) carry the 'KMSKS' region motif. Residue K414 coordinates ATP.

Belongs to the class-I aminoacyl-tRNA synthetase family. Monomer. It depends on Zn(2+) as a cofactor.

It localises to the cytoplasm. The enzyme catalyses tRNA(Cys) + L-cysteine + ATP = L-cysteinyl-tRNA(Cys) + AMP + diphosphate. The polypeptide is Cysteine--tRNA ligase (Streptomyces coelicolor (strain ATCC BAA-471 / A3(2) / M145)).